A 297-amino-acid chain; its full sequence is Probable oxidoreductase (297 aa).

9–33 (VVTGGASGLGAETVRALAAAGAEVT) is a binding site for NAD(+). Ser138 provides a ligand contact to substrate. The Proton acceptor role is filled by Tyr164.

The protein belongs to the short-chain dehydrogenases/reductases (SDR) family.

This chain is Probable oxidoreductase, found in Streptomyces lividans.